We begin with the raw amino-acid sequence, 291 residues long: MASVTLSEAEKVYIVHGVQEDLRVDGRGCEDYRCVEVETDVVSNTSGSARVKLGHTDILVGVKAEMGTPKLEKPNEGYLEFFVDCSASATPEFEGRGGDDLGTEIANTLYRIFNNKSSVDLKTLCISPREHCWVLYVDVLLLECGGNLFDAISIAVKAALFNTRIPRVRVLEDEEGSKDIELSDDPYDCIRLSVENVPCIVTLCKIGYRHVVDATLQEEACSLASLLVSVTSKGVVTCMRKVGKGSLDPESIFEMMETGKRVGKVLHASLQSVVHKEESLGPKRQKVGFLG.

Alanine 2 carries the N-acetylalanine modification. Residue lysine 116 is modified to N6-acetyllysine. The residue at position 177 (serine 177) is a Phosphoserine.

This sequence belongs to the RNase PH family. As to quaternary structure, component of the RNA exosome core complex (Exo-9), composed of EXOSC1, EXOSC2, EXOSC3, EXOSC4, EXOSC5, EXOSC6, EXOSC7, EXOSC8 and EXOSC9; within the complex interacts with EXOSC2 and EXOSC4. The catalytically inactive RNA exosome core complex (Exo-9) associates with the catalytic subunit EXOSC10/RRP6. Exo-9 may associate with DIS3 to form the nucleolar exosome complex, or DIS3L to form the cytoplasmic exosome complex. Exo-9 is formed by a hexameric base ring consisting of the heterodimers EXOSC4-EXOSC9, EXOSC5-EXOSC8 and EXOSC6-EXOSC7, and a cap ring consisting of EXOSC1, EXOSC2 and EXOSC3. The RNA exosome complex associates with cofactors C1D/RRP47, MPHOSPH6/MPP6 and MTREX/MTR4. Interacts with ZC3HAV1. Interacts with DIS3; the interaction is direct.

The protein localises to the nucleus. It localises to the nucleolus. The protein resides in the cytoplasm. Functionally, non-catalytic component of the RNA exosome complex which has 3'-&gt;5' exoribonuclease activity and participates in a multitude of cellular RNA processing and degradation events. In the nucleus, the RNA exosome complex is involved in proper maturation of stable RNA species such as rRNA, snRNA and snoRNA, in the elimination of RNA processing by-products and non-coding 'pervasive' transcripts, such as antisense RNA species and promoter-upstream transcripts (PROMPTs), and of mRNAs with processing defects, thereby limiting or excluding their export to the cytoplasm. The RNA exosome may be involved in Ig class switch recombination (CSR) and/or Ig variable region somatic hypermutation (SHM) by targeting AICDA deamination activity to transcribed dsDNA substrates. In the cytoplasm, the RNA exosome complex is involved in general mRNA turnover and specifically degrades inherently unstable mRNAs containing AU-rich elements (AREs) within their 3' untranslated regions, and in RNA surveillance pathways, preventing translation of aberrant mRNAs. It seems to be involved in degradation of histone mRNA. The catalytic inactive RNA exosome core complex of 9 subunits (Exo-9) is proposed to play a pivotal role in the binding and presentation of RNA for ribonucleolysis, and to serve as a scaffold for the association with catalytic subunits and accessory proteins or complexes. In Homo sapiens (Human), this protein is Exosome complex component RRP42 (EXOSC7).